A 166-amino-acid chain; its full sequence is Protein SprT (166 aa).

In terms of domain architecture, SprT-like spans 19–164; the sequence is REHLAKANLK…CVHCGDLLVA (146 aa). His78 is a Zn(2+) binding site. Glu79 is a catalytic residue. A Zn(2+)-binding site is contributed by His82.

It belongs to the SprT family. Zn(2+) serves as cofactor.

The protein localises to the cytoplasm. This chain is Protein SprT, found in Klebsiella pneumoniae (strain 342).